Consider the following 658-residue polypeptide: MAEAAAAAAAAAAAGETSASSGSAAERDPDQDRAGRRLRVLSGHLLGRPQEALSTNECKARRAASAATAAPTATPAAPESGIIPKKRQELMKWNGWGYNDSKFFLNKKGQLELTGKRYPLSGVALPTFKDWIQNTFGINLDHKTTSKASLNPSDTPPSIVNEDFLHELKKTNISYSQEADDRVFRAHGHCLHEIFLLREGMFERIPDIVLWPTCHDDVVKIVNLACKYNLCIIPIGGGTSVSYGLMCPADETRTIISLDTSQMNRILWVDENNLTAHVEAGITGQELERQLKESGYCTGHEPDSLEFSTVGGWISTRASGMKKNIYGNIEDLVVHMKVVTPRGVIEKSCQGPRMSTGPDIHHFIMGSEGTLGVITEATIKIRPTPEYQKYGSVAFPNFEQGVACLREIAKQRCAPASIRLMDNQQFQFGHALKPQVSSIFTSFLDGLKKFYITKFKGFDPNQLSVATLLFEGDREKVLQHEKQVYDIAAKFGGLAAGEDNGQRGYLLTYVIAYMRDLGLEYYIIGESFETSAPWDRVVDLCRNVKERIRRECKEKGVQFPPLSTCRVTQTYDAGACIYFYFAFNYRGISDPLAVFEQTEAAAREEILANGGSLSHHHGVGKLRKQWLKESISDVGFGMLKSVKDYVDPTNIFGNRNLL.

The span at 1–24 (MAEAAAAAAAAAAAGETSASSGSA) shows a compositional bias: low complexity. Residues 1-37 (MAEAAAAAAAAAAAGETSASSGSAAERDPDQDRAGRR) are disordered. A peroxisome-targeting transit peptide spans 1-58 (MAEAAAAAAAAAAAGETSASSGSAAERDPDQDRAGRRLRVLSGHLLGRPQEALSTNEC). The segment covering 25-35 (AERDPDQDRAG) has biased composition (basic and acidic residues). A Phosphoserine modification is found at serine 65. At threonine 74 the chain carries Phosphothreonine. N6-acetyllysine is present on lysine 102. Residues 202–384 (FERIPDIVLW…TEATIKIRPT (183 aa)) enclose the FAD-binding PCMH-type domain. Residues 234–240 (PIGGGTS), 303–309 (DSLEFST), and 316–319 (TRAS) contribute to the FAD site. Lysine 347 bears the N6-acetyllysine mark. 368-374 (EGTLGVI) serves as a coordination point for FAD. Substrate is bound at residue arginine 515. Tyrosine 578 acts as the Proton donor/acceptor in catalysis. Important for enzyme activity stretches follow at residues 615-617 (HHH) and 654-658 (NRNLL).

It belongs to the FAD-binding oxidoreductase/transferase type 4 family. In terms of assembly, homodimer. Requires FAD as cofactor.

The protein resides in the peroxisome membrane. The protein localises to the peroxisome. The catalysed reaction is a long chain fatty alcohol + a 1-acylglycerone 3-phosphate = a 1-O-alkylglycerone 3-phosphate + a long-chain fatty acid + H(+). It carries out the reaction hexadecan-1-ol + 1-hexadecanoylglycerone 3-phosphate = 1-O-hexadecylglycerone 3-phosphate + hexadecanoate + H(+). The enzyme catalyses 1-hexadecanoylglycerone 3-phosphate + a long-chain fatty acid = a 1-acylglycerone 3-phosphate + hexadecanoate. It functions in the pathway glycerolipid metabolism; ether lipid biosynthesis. Its activity is regulated as follows. Inhibited by N-ethylmaleimide, p-bromophenacylbromide, 2,4- dinitrofluorobenzene and divalent cations such as such as Mn(2+), Mg(2+) and Zn(2+). Inhibition by p-bromophenacylbromide is strongly pH dependent and is highest at alkaline conditions. Catalyzes the exchange of the acyl chain in acyl-dihydroxyacetonephosphate (acyl-DHAP) for a long chain fatty alcohol, yielding the first ether linked intermediate, i.e. alkyl-dihydroxyacetonephosphate (alkyl-DHAP), in the pathway of ether lipid biosynthesis. The polypeptide is Alkyldihydroxyacetonephosphate synthase, peroxisomal (AGPS) (Cavia porcellus (Guinea pig)).